The chain runs to 388 residues: Lysocardiolipin acyltransferase 1 (388 aa).

Transmembrane regions (helical) follow at residues 9–29 (FLLF…GPLL) and 46–66 (IVAT…GVKV). The HXXXXD motif signature appears at 85 to 90 (HRTRLD). A run of 2 helical transmembrane segments spans residues 321-341 (IILV…CASL) and 342-362 (CLCP…LCQQ).

The protein belongs to the 1-acyl-sn-glycerol-3-phosphate acyltransferase family.

It localises to the endoplasmic reticulum membrane. The catalysed reaction is a 1-acyl-sn-glycero-3-phosphate + an acyl-CoA = a 1,2-diacyl-sn-glycero-3-phosphate + CoA. It carries out the reaction a 1-acyl-sn-glycero-3-phospho-(1D-myo-inositol) + an acyl-CoA = a 1,2-diacyl-sn-glycero-3-phospho-(1D-myo-inositol) + CoA. It catalyses the reaction 1-acyl-sn-glycero-3-phospho-(1'-sn-glycerol) + an acyl-CoA = a 1,2-diacyl-sn-glycero-3-phospho-(1'-sn-glycerol) + CoA. The enzyme catalyses 1-hexadecanoyl-sn-glycero-3-phosphate + (9Z)-octadecenoyl-CoA = 1-hexadecanoyl-2-(9Z-octadecenoyl)-sn-glycero-3-phosphate + CoA. The catalysed reaction is 1-(9Z-octadecenoyl)-sn-glycero-3-phosphate + (9Z)-octadecenoyl-CoA = 1,2-di-(9Z-octadecenoyl)-sn-glycero-3-phosphate + CoA. It carries out the reaction 1-(9Z,12Z)-octadecadienoyl-sn-glycero-3-phosphate + (9Z)-octadecenoyl-CoA = 1-(9Z,12Z)-octadecadienoyl-2-(9Z)-octadecenoyl-sn-glycero-3-phosphate + CoA. It catalyses the reaction 1-(9Z,12Z,15Z)-octadecatrienoyl-sn-glycero-3-phosphate + (9Z)-octadecenoyl-CoA = 1-(9Z,12Z,15Z)-octadecatrienoyl-2-(9Z)-octadecenoyl-sn-glycero-3-phosphate + CoA. The enzyme catalyses 1-(9Z-octadecenoyl)-sn-glycero-3-phosphate + hexadecanoyl-CoA = 1-(9Z)-octadecenoyl-2-hexadecanoyl-sn-glycero-3-phosphate + CoA. The catalysed reaction is 1-(9Z-octadecenoyl)-sn-glycero-3-phosphate + octadecanoyl-CoA = 1-(9Z-octadecenoyl)-2-octadecanoyl-sn-glycero-3-phosphate + CoA. It carries out the reaction 1-acyl-sn-glycero-3-phospho-(1'-sn-glycerol) + (9Z)-octadecenoyl-CoA = 1-acyl-2-(9Z-octadecenoyl)-sn-glycero-3-phospho-(1'-sn-glycerol) + CoA. It catalyses the reaction a 1-acyl-sn-glycero-3-phospho-(1D-myo-inositol) + (9Z)-octadecenoyl-CoA = a 1-acyl-2-(9Z-octadecenoyl)-sn-glycero-3-phospho-(1D-myo-inositol) + CoA. The enzyme catalyses 1-hexadecanoyl-sn-glycero-3-phospho-(1D-myo-inositol) + hexadecanoyl-CoA = 1,2-dihexadecanoyl-sn-glycero-3-phospho-(1D-myo-inositol) + CoA. The catalysed reaction is 1-hexadecanoyl-sn-glycero-3-phospho-(1D-myo-inositol) + octadecanoyl-CoA = 1-hexadecanoyl-2-octadecanoyl-sn-glycero-3-phospho-(1D-myo-inositol) + CoA. It carries out the reaction 1-hexadecanoyl-sn-glycero-3-phospho-(1D-myo-inositol) + (9Z)-octadecenoyl-CoA = 1-hexadecanoyl-2-(9Z-octadecenoyl)-sn-glycero-3-phospho-(1D-myo-inositol) + CoA. It catalyses the reaction 1-hexadecanoyl-sn-glycero-3-phospho-(1D-myo-inositol) + (9Z,12Z)-octadecadienoyl-CoA = 1-hexadecanoyl-2-(9Z,12Z-octadecadienoyl)-sn-glycero-3-phospho-(1D-myo-inositol) + CoA. The enzyme catalyses 1-hexadecanoyl-sn-glycero-3-phospho-(1D-myo-inositol) + (5Z,8Z,11Z,14Z)-eicosatetraenoyl-CoA = 1-hexadecanoyl-2-(5Z,8Z,11Z,14Z-eicosatetraenoyl)-sn-glycero-3-phospho-D-myo-inositol + CoA. The catalysed reaction is 1-hexadecanoyl-sn-glycero-3-phospho-(1'-sn-glycerol) + hexadecanoyl-CoA = 1,2-dihexadecanoyl-sn-glycero-3-phospho-(1'-sn-glycerol) + CoA. It carries out the reaction 1-hexadecanoyl-sn-glycero-3-phospho-(1'-sn-glycerol) + octadecanoyl-CoA = 1-hexadecanoyl-2-octadecanoyl-sn-glycero-3-phospho-(1'-sn-glycerol) + CoA. It catalyses the reaction 1-hexadecanoyl-sn-glycero-3-phospho-(1'-sn-glycerol) + (9Z)-octadecenoyl-CoA = 1-hexadecanoyl-2-(9Z-octadecenoyl)-sn-glycero-3-phospho-(1'-sn-glycerol) + CoA. The enzyme catalyses 1-hexadecanoyl-sn-glycero-3-phospho-(1'-sn-glycerol) + (9Z,12Z)-octadecadienoyl-CoA = 1-hexadecanoyl-2-(9Z,12Z-octadecadienoyl)-sn-glycero-3-phospho-(1'-sn-glycerol) + CoA. The catalysed reaction is 1-tetradecanoyl-sn-glycero-3-phospho-(1'-sn-glycerol) + (9Z)-octadecenoyl-CoA = 1-tetradecanoyl-2-(9Z-octadecenoyl)-sn-glycero-3-phospho-(1'-sn-glycerol) + CoA. It carries out the reaction 1-octadecanoyl-sn-glycero-3-phospho-(1'-sn-glycerol) + (9Z)-octadecenoyl-CoA = 1-octadecanoyl-2-(9Z-octadecenoyl)-sn-glycero-3-phospho-(1'-sn-glycerol) + CoA. It catalyses the reaction 1-(9Z-octadecenoyl)-sn-glycero-3-phospho-(1'-sn-glycerol) + (9Z)-octadecenoyl-CoA = 1,2-di-(9Z-octadecenoyl)-sn-glycero-3-phospho-(1'-sn-glycerol) + CoA. The enzyme catalyses 1-hexadecanoyl-sn-glycero-3-phospho-(1D-myo-inositol) + dodecanoyl-CoA = 1-hexadecanoyl-2-dodecanoyl-sn-glycero-3-phospho-(1D-myo-inositol) + CoA. The catalysed reaction is 1',3'-bis-[1-acyl-sn-glycero-3-phospho]-glycerol + (9Z)-octadecenoyl-CoA = 1'-[1-acyl-2-(9Z)-octadecenoyl-sn-glycero-3-phospho],3'-[1-acyl,2-hydroxy-sn-glycero-3-phospho]-glycerol + CoA. It carries out the reaction 1'-[1,2-diacyl-sn-glycero-3-phospho],3'-[1-acyl-sn-glycero-3-phospho]-glycerol + (9Z)-octadecenoyl-CoA = 1'-[1,2-diacyl-sn-glycero-3-phospho],3'-[1-acyl,2-(9Z)-octadecenoyl-sn-glycero-3-phospho]-glycerol + CoA. It catalyses the reaction 1'-[1,2-diacyl-sn-glycero-3-phospho],3'-[1-acyl-sn-glycero-3-phospho]-glycerol + (9Z,12Z)-octadecadienoyl-CoA = 1'-[1,2-diacyl-sn-glycero-3-phospho],3'-[1-acyl,2-(9Z,12Z)-octadecadienoyl-sn-glycero-3-phospho]-glycerol + CoA. The enzyme catalyses 1'-[1,2-diacyl-sn-glycero-3-phospho],3'-[1-acyl-sn-glycero-3-phospho]-glycerol + dodecanoyl-CoA = 1'-[1,2-diacyl-sn-glycero-3-phospho],3'-[1-acyl,2-dodecanoyl-sn-glycero-3-phospho]-glycerol + CoA. The catalysed reaction is 1',3'-bis-[1-acyl-sn-glycero-3-phospho]-glycerol + dodecanoyl-CoA = 1'-[1-acyl-2-dodecanoyl-sn-glycero-3-phospho],3'-[1-acyl,2-hydroxy-sn-glycero-3-phospho]-glycerol + CoA. It carries out the reaction a 1-acyl-sn-glycero-3-phosphate + (9Z)-octadecenoyl-CoA = a 1-acyl-2-(9Z-octadecenoyl)-sn-glycero-3-phosphate + CoA. It catalyses the reaction 1',3'-bis-[1-acyl-sn-glycero-3-phospho]-glycerol + (9Z,12Z)-octadecadienoyl-CoA = 1'-[1-acyl-2-(9Z,12Z)-octadecadienoyl-sn-glycero-3-phospho],3'-[1-acyl,2-hydroxy-sn-glycero-3-phospho]-glycerol + CoA. The enzyme catalyses 1',3'-bis-[1-acyl-sn-glycero-3-phospho]-glycerol + hexadecanoyl-CoA = 1'-[1-acyl-2-hexadecanoyl-sn-glycero-3-phospho],3'-[1-acyl,2-hydroxy-sn-glycero-3-phospho]-glycerol + CoA. The catalysed reaction is 1',3'-bis-[1-acyl-sn-glycero-3-phospho]-glycerol + octadecanoyl-CoA = 1'-[1-acyl-2-octadecanoyl-sn-glycero-3-phospho],3'-[1-acyl,2-hydroxy-sn-glycero-3-phospho]-glycerol + CoA. It carries out the reaction 1'-[1,2-diacyl-sn-glycero-3-phospho],3'-[1-acyl-sn-glycero-3-phospho]-glycerol + octanoyl-CoA = 1'-[1,2-diacyl-sn-glycero-3-phospho],3'-[1-acyl,2-octanoyl-sn-glycero-3-phospho]-glycerol + CoA. It catalyses the reaction 1',3'-bis-[1-acyl-sn-glycero-3-phospho]-glycerol + octanoyl-CoA = 1'-[1-acyl-2-octanoyl-sn-glycero-3-phospho],3'-[1-acyl,2-hydroxy-sn-glycero-3-phospho]-glycerol + CoA. The enzyme catalyses 1'-[1,2-diacyl-sn-glycero-3-phospho],3'-[1-acyl-sn-glycero-3-phospho]-glycerol + hexadecanoyl-CoA = 1'-[1,2-diacyl-sn-glycero-3-phospho],3'-[1-acyl,2-hexadecanoyl-sn-glycero-3-phospho]-glycerol + CoA. The catalysed reaction is 1'-[1,2-diacyl-sn-glycero-3-phospho],3'-[1-acyl-sn-glycero-3-phospho]-glycerol + (5Z,8Z,11Z,14Z)-eicosatetraenoyl-CoA = 1'-[1,2-diacyl-sn-glycero-3-phospho],3'-[1-acyl,2-(5Z,8Z,11Z,14Z)-eicosatetraenoyl-sn-glycero-3-phospho]-glycerol + CoA. It carries out the reaction 1',3'-bis-[1-acyl-sn-glycero-3-phospho]-glycerol + (5Z,8Z,11Z,14Z)-eicosatetraenoyl-CoA = 1'-[1-acyl-2-(5Z,8Z,11Z,14Z)-eicosatetraenoyl-sn-glycero-3-phospho],3'-[1-acyl,2-hydroxy-sn-glycero-3-phospho]-glycerol + CoA. It catalyses the reaction a 1-acyl-sn-glycero-3-phospho-(1D-myo-inositol) + octadecanoyl-CoA = a 1-acyl-2-octadecanoyl-sn-glycero-3-phospho-(1D-myo-inositol) + CoA. The enzyme catalyses a 2-acyl-sn-glycero-3-phospho-D-myo-inositol + octadecanoyl-CoA = 1-octadecanoyl-2-acyl-sn-glycero-3-phospho-1D-myo-inositol + CoA. Its pathway is phospholipid metabolism; CDP-diacylglycerol biosynthesis; CDP-diacylglycerol from sn-glycerol 3-phosphate: step 2/3. Its function is as follows. Exhibits acyl-CoA:lysocardiolipin acyltransferase (ALCAT) activity; catalyzes the reacylation of lyso-cardiolipin to cardiolipin (CL), a key step in CL remodeling. Recognizes both monolysocardiolipin and dilysocardiolipin as substrates with a preference for linoleoyl-CoA and oleoyl-CoA as acyl donors. Also exhibits 1-acyl-sn-glycerol-3-phosphate acyltransferase activity (AGPAT) activity; converts 1-acyl-sn-glycerol-3- phosphate (lysophosphatidic acid or LPA) into 1,2-diacyl-sn-glycerol-3- phosphate (phosphatidic acid or PA) by incorporating an acyl moiety at the sn-2 position of the glycerol backbone. Possesses both lysophosphatidylinositol acyltransferase (LPIAT) and lysophosphatidylglycerol acyltransferase (LPGAT) activities. Required for establishment of the hematopoietic and endothelial lineages. In Danio rerio (Zebrafish), this protein is Lysocardiolipin acyltransferase 1 (lclat1).